The following is a 158-amino-acid chain: UPF0758 protein YkfG (158 aa).

Residues Ala-36 to Leu-158 form the MPN domain. Positions 107, 109, and 120 each coordinate Zn(2+). The JAMM motif motif lies at His-107–Asp-120.

The protein belongs to the UPF0758 family.

This chain is UPF0758 protein YkfG (ykfG), found in Escherichia coli (strain K12).